The sequence spans 762 residues: Polyadenylate-binding protein, cytoplasmic and nuclear (762 aa).

Residues Thr-39–Gln-58 form a disordered region. Residues Pro-48 to Gln-58 show a composition bias toward low complexity. 4 RRM domains span residues Ala-61–Arg-139, Gly-149–Pro-226, Thr-242–Lys-320, and Val-346–Arg-470. Disordered regions lie at residues Lys-376–Leu-429, Ser-596–Pro-663, and Val-740–Ala-762. Positions Gly-389–Ser-425 are enriched in basic and acidic residues. Residues Gly-600–Gln-612 show a composition bias toward gly residues. Residues Ala-645–Pro-663 are compositionally biased toward low complexity. The PABC domain maps to Glu-664–Arg-741. Positions Ser-753–Ala-762 are enriched in basic and acidic residues.

The protein belongs to the polyadenylate-binding protein type-1 family.

It is found in the cytoplasm. The protein localises to the nucleus. Binds the poly(A) tail of mRNA. Appears to be an important mediator of the multiple roles of the poly(A) tail in mRNA biogenesis, stability and translation. In the nucleus, involved in both mRNA cleavage and polyadenylation. Is also required for efficient mRNA export to the cytoplasm. Acts in concert with a poly(A)-specific nuclease (PAN) to affect poly(A) tail shortening, which may occur concomitantly with either nucleocytoplasmic mRNA transport or translational initiation. In the cytoplasm, stimulates translation initiation and regulates mRNA decay through translation termination-coupled poly(A) shortening, probably mediated by PAN. This is Polyadenylate-binding protein, cytoplasmic and nuclear (PAB1) from Pyricularia oryzae (strain 70-15 / ATCC MYA-4617 / FGSC 8958) (Rice blast fungus).